A 620-amino-acid chain; its full sequence is Sorbicillinoid biosynthetic cluster transcription factor 1 (620 aa).

The zn(2)-C6 fungal-type DNA-binding region spans 10–37; it reads CEECRRRKARCDRVRPQCGICADAGRTC. Residues 285 to 308 are disordered; sequence HDDETSPNENSGSCPSVSPSTTQN. Residues 291-308 are compositionally biased toward polar residues; sequence PNENSGSCPSVSPSTTQN.

The protein localises to the nucleus. Functionally, transcription factor that acts as the main regulator of the gene cluster that mediates the biosynthesis of sorbicillinoids, a diverse group of yellow secondary metabolites that restrict growth of competing pathogenic fungi but not of bacteria. This chain is Sorbicillinoid biosynthetic cluster transcription factor 1, found in Penicillium rubens (strain ATCC 28089 / DSM 1075 / NRRL 1951 / Wisconsin 54-1255) (Penicillium chrysogenum).